Reading from the N-terminus, the 252-residue chain is Phosphate import ATP-binding protein PstB (252 aa).

An ABC transporter domain is found at 6 to 247; the sequence is IEVKNLNTYF…PKNKQTENYI (242 aa). An ATP-binding site is contributed by 38-45; sequence GPSGCGKS.

Belongs to the ABC transporter superfamily. Phosphate importer (TC 3.A.1.7) family. The complex is composed of two ATP-binding proteins (PstB), two transmembrane proteins (PstC and PstA) and a solute-binding protein (PstS).

It localises to the cell membrane. The catalysed reaction is phosphate(out) + ATP + H2O = ADP + 2 phosphate(in) + H(+). Functionally, part of the ABC transporter complex PstSACB involved in phosphate import. Responsible for energy coupling to the transport system. The chain is Phosphate import ATP-binding protein PstB from Methanosphaera stadtmanae (strain ATCC 43021 / DSM 3091 / JCM 11832 / MCB-3).